The following is a 798-amino-acid chain: Serine/threonine-protein kinase SIK2 (798 aa).

The Protein kinase domain occupies 26 to 277 (YDIERTLGKG…ISQIKQHKWM (252 aa)). ATP contacts are provided by residues 32–40 (LGKGNFAVV) and lysine 55. Residue aspartate 148 is the Proton acceptor of the active site. Threonine 181 carries the post-translational modification Phosphothreonine. At serine 185 the chain carries Phosphoserine. The UBA domain occupies 302 to 342 (DYNEQVLGIMQTLGIDRQRTVESLQNSSYNHFAAIYYLLLE). Positions 351 to 361 (QLSSRPATGRQ) are enriched in polar residues. Positions 351 to 382 (QLSSRPATGRQQRPRSSEISNAEMPQDSLTSE) are disordered. A Phosphoserine modification is found at serine 575. The segment at 672–691 (ACPQTSQTSATNGLPPSDSA) is disordered. A compositionally biased stretch (polar residues) spans 673–685 (CPQTSQTSATNGL).

This sequence belongs to the protein kinase superfamily. CAMK Ser/Thr protein kinase family. SNF1 subfamily. It depends on Mg(2+) as a cofactor. Post-translationally, phosphorylated at Thr-181 by STK11/LKB1 in complex with STE20-related adapter-alpha (STRADA) pseudo kinase and CAB39. In terms of tissue distribution, ubiquitously expressed in embryonic tissue.

Its subcellular location is the cytoplasm. It catalyses the reaction L-seryl-[protein] + ATP = O-phospho-L-seryl-[protein] + ADP + H(+). It carries out the reaction L-threonyl-[protein] + ATP = O-phospho-L-threonyl-[protein] + ADP + H(+). With respect to regulation, activated by phosphorylation on Thr-181. Phosphorylates IRS1 in insulin-stimulated adipocytes, potentially modulating the efficiency of insulin signal transduction. Inhibits CREB activity by phosphorylating and repressing the CREB-specific coactivators, CRTC1-3. The polypeptide is Serine/threonine-protein kinase SIK2 (SIK2) (Gallus gallus (Chicken)).